A 264-amino-acid polypeptide reads, in one-letter code: O-methyltransferase resE (264 aa).

S-adenosyl-L-methionine-binding residues include glutamine 97 and histidine 142.

It belongs to the methyltransferase superfamily.

It carries out the reaction desmethylrestrictinol + S-adenosyl-L-methionine = restrictinol + S-adenosyl-L-homocysteine + H(+). Its pathway is antifungal biosynthesis. In terms of biological role, O-methyltransferase; part of the gene cluster that mediates the biosynthesis of the tetrahydropyranyl antifungal agent restricticin that acts as an inhibitor of CYP51 and blocks the ergosterol biosynthesis. Within the pathway, resE uses S-adenosylmethionine to methylate position C4 of desmethylrestrictinol to produce restrictinol. The highly reducing polyketide synthase resH, the short chain dehydrogenase resG, the cyclase resF, the FAD-dependent monooxygenase resA and the enoylreductase resD are required to generate the first stable intermediate desmethylrestrictinol. ResH with resD biosynthesize the first polyketide chain intermediate that is reduced by resG, followed by epoxidation by resA before 6-endo cyclization via epoxide opening by resF leads to desmethylrestrictinol. The methyltransferase resE then catalyzes the C4 O-methylation of desmethylrestrictinol to produce restrictinol, and the nonribosomal peptide synthetase resC catalyzes the C3 esterification of restrictinol with glycine that leads to restricticin. The sequence is that of O-methyltransferase resE from Aspergillus sclerotiorum.